Here is a 380-residue protein sequence, read N- to C-terminus: Chaperone protein DnaJ (380 aa).

The 66-residue stretch at 5-70 folds into the J domain; that stretch reads DFYETLGVSK…QKRAAYDRFG (66 aa). Residues 141-219 form a CR-type zinc finger; it reads GKTAQIRVPT…CHGQGRVTEE (79 aa). Positions 154, 157, 171, 174, 193, 196, 207, and 210 each coordinate Zn(2+). CXXCXGXG motif repeat units follow at residues 154–161, 171–178, 193–200, and 207–214; these read CEVCSGSG, CATCQGSG, CPTCQGRG, and CGKCHGQG.

The protein belongs to the DnaJ family. In terms of assembly, homodimer. Requires Zn(2+) as cofactor.

It is found in the cytoplasm. Its function is as follows. Participates actively in the response to hyperosmotic and heat shock by preventing the aggregation of stress-denatured proteins and by disaggregating proteins, also in an autonomous, DnaK-independent fashion. Unfolded proteins bind initially to DnaJ; upon interaction with the DnaJ-bound protein, DnaK hydrolyzes its bound ATP, resulting in the formation of a stable complex. GrpE releases ADP from DnaK; ATP binding to DnaK triggers the release of the substrate protein, thus completing the reaction cycle. Several rounds of ATP-dependent interactions between DnaJ, DnaK and GrpE are required for fully efficient folding. Also involved, together with DnaK and GrpE, in the DNA replication of plasmids through activation of initiation proteins. This Allorhizobium ampelinum (strain ATCC BAA-846 / DSM 112012 / S4) (Agrobacterium vitis (strain S4)) protein is Chaperone protein DnaJ.